Consider the following 261-residue polypeptide: Putative hydro-lyase SH0274 (261 aa).

The protein belongs to the D-glutamate cyclase family.

This chain is Putative hydro-lyase SH0274, found in Staphylococcus haemolyticus (strain JCSC1435).